Here is a 213-residue protein sequence, read N- to C-terminus: Ribonuclease T (213 aa).

The region spanning 28-202 (VVVDVETGGF…YDTEQTARLF (175 aa)) is the Exonuclease domain. Mg(2+) is bound by residues aspartate 31, glutamate 33, histidine 189, and aspartate 194. The active-site Proton donor/acceptor is the histidine 189.

Belongs to the RNase T family. In terms of assembly, homodimer. It depends on Mg(2+) as a cofactor.

Functionally, trims short 3' overhangs of a variety of RNA species, leaving a one or two nucleotide 3' overhang. Responsible for the end-turnover of tRNA: specifically removes the terminal AMP residue from uncharged tRNA (tRNA-C-C-A). Also appears to be involved in tRNA biosynthesis. The chain is Ribonuclease T from Xanthomonas axonopodis pv. citri (strain 306).